Reading from the N-terminus, the 349-residue chain is Dihydroorotate dehydrogenase (quinone) (349 aa).

FMN contacts are provided by residues 67–71 (AGLDK) and Thr-91. Lys-71 is a binding site for substrate. 116–120 (NRLGF) contributes to the substrate binding site. The FMN site is built by Asn-147 and Asn-180. Residue Asn-180 coordinates substrate. The active-site Nucleophile is Ser-183. Position 185 (Asn-185) interacts with substrate. Lys-225 and Thr-253 together coordinate FMN. Position 254 to 255 (254 to 255 (NT)) interacts with substrate. Residues Gly-276, Gly-305, and 326-327 (YT) each bind FMN.

The protein belongs to the dihydroorotate dehydrogenase family. Type 2 subfamily. In terms of assembly, monomer. It depends on FMN as a cofactor.

It localises to the cell membrane. It catalyses the reaction (S)-dihydroorotate + a quinone = orotate + a quinol. The protein operates within pyrimidine metabolism; UMP biosynthesis via de novo pathway; orotate from (S)-dihydroorotate (quinone route): step 1/1. In terms of biological role, catalyzes the conversion of dihydroorotate to orotate with quinone as electron acceptor. This chain is Dihydroorotate dehydrogenase (quinone), found in Bordetella avium (strain 197N).